A 249-amino-acid polypeptide reads, in one-letter code: Glucosamine-6-phosphate deaminase (249 aa).

Residue aspartate 67 is the Proton acceptor; for enolization step of the active site. The active-site For ring-opening step is the asparagine 136. Catalysis depends on histidine 138, which acts as the Proton acceptor; for ring-opening step. The active-site For ring-opening step is glutamate 143.

This sequence belongs to the glucosamine/galactosamine-6-phosphate isomerase family. NagB subfamily.

The enzyme catalyses alpha-D-glucosamine 6-phosphate + H2O = beta-D-fructose 6-phosphate + NH4(+). It functions in the pathway amino-sugar metabolism; N-acetylneuraminate degradation; D-fructose 6-phosphate from N-acetylneuraminate: step 5/5. In terms of biological role, catalyzes the reversible isomerization-deamination of glucosamine 6-phosphate (GlcN6P) to form fructose 6-phosphate (Fru6P) and ammonium ion. The protein is Glucosamine-6-phosphate deaminase of Clostridium botulinum (strain Alaska E43 / Type E3).